A 457-amino-acid polypeptide reads, in one-letter code: Allantoinase (457 aa).

The Zn(2+) site is built by histidine 58, histidine 60, lysine 145, histidine 181, histidine 237, and aspartate 310. The residue at position 145 (lysine 145) is an N6-carboxylysine.

It belongs to the metallo-dependent hydrolases superfamily. Allantoinase family. In terms of assembly, homotetramer. Requires Zn(2+) as cofactor. Post-translationally, carboxylation allows a single lysine to coordinate two zinc ions.

The enzyme catalyses (S)-allantoin + H2O = allantoate + H(+). Its pathway is nitrogen metabolism; (S)-allantoin degradation; allantoate from (S)-allantoin: step 1/1. In terms of biological role, catalyzes the conversion of allantoin (5-ureidohydantoin) to allantoic acid by hydrolytic cleavage of the five-member hydantoin ring. The sequence is that of Allantoinase from Solibacter usitatus (strain Ellin6076).